We begin with the raw amino-acid sequence, 313 residues long: tRNA dimethylallyltransferase (313 aa).

11-18 (GPTAGGKT) serves as a coordination point for ATP. Residue 13–18 (TAGGKT) participates in substrate binding. Interaction with substrate tRNA stretches follow at residues 36–39 (DSAL), 160–164 (QRIGR), and 243–248 (RCVGYR).

The protein belongs to the IPP transferase family. In terms of assembly, monomer. Requires Mg(2+) as cofactor.

It carries out the reaction adenosine(37) in tRNA + dimethylallyl diphosphate = N(6)-dimethylallyladenosine(37) in tRNA + diphosphate. In terms of biological role, catalyzes the transfer of a dimethylallyl group onto the adenine at position 37 in tRNAs that read codons beginning with uridine, leading to the formation of N6-(dimethylallyl)adenosine (i(6)A). The sequence is that of tRNA dimethylallyltransferase from Neisseria meningitidis serogroup C / serotype 2a (strain ATCC 700532 / DSM 15464 / FAM18).